Here is a 176-residue protein sequence, read N- to C-terminus: Peptide deformylase (176 aa).

Positions 100 and 142 each coordinate Fe cation. The active site involves glutamate 143. Residue histidine 146 participates in Fe cation binding.

This sequence belongs to the polypeptide deformylase family. It depends on Fe(2+) as a cofactor.

It carries out the reaction N-terminal N-formyl-L-methionyl-[peptide] + H2O = N-terminal L-methionyl-[peptide] + formate. Functionally, removes the formyl group from the N-terminal Met of newly synthesized proteins. Requires at least a dipeptide for an efficient rate of reaction. N-terminal L-methionine is a prerequisite for activity but the enzyme has broad specificity at other positions. The polypeptide is Peptide deformylase (Elusimicrobium minutum (strain Pei191)).